The primary structure comprises 65 residues: Large ribosomal subunit protein bL35 (65 aa).

The segment at 1 to 46 is disordered; that stretch reads MPKIKTNRGAAKRFKPTGSGGFKRAQSHRRHILTKKSTKRKRHLRS. Residues 25–45 are compositionally biased toward basic residues; sequence AQSHRRHILTKKSTKRKRHLR.

This sequence belongs to the bacterial ribosomal protein bL35 family.

This chain is Large ribosomal subunit protein bL35, found in Thioalkalivibrio sulfidiphilus (strain HL-EbGR7).